Here is a 284-residue protein sequence, read N- to C-terminus: Ribosomal RNA small subunit methyltransferase A (284 aa).

N22, L24, G49, E70, D97, and N117 together coordinate S-adenosyl-L-methionine.

Belongs to the class I-like SAM-binding methyltransferase superfamily. rRNA adenine N(6)-methyltransferase family. RsmA subfamily.

It localises to the cytoplasm. The enzyme catalyses adenosine(1518)/adenosine(1519) in 16S rRNA + 4 S-adenosyl-L-methionine = N(6)-dimethyladenosine(1518)/N(6)-dimethyladenosine(1519) in 16S rRNA + 4 S-adenosyl-L-homocysteine + 4 H(+). In terms of biological role, specifically dimethylates two adjacent adenosines (A1518 and A1519) in the loop of a conserved hairpin near the 3'-end of 16S rRNA in the 30S particle. May play a critical role in biogenesis of 30S subunits. The chain is Ribosomal RNA small subunit methyltransferase A from Desulforapulum autotrophicum (strain ATCC 43914 / DSM 3382 / VKM B-1955 / HRM2) (Desulfobacterium autotrophicum).